Reading from the N-terminus, the 199-residue chain is MAHSQLLSSEERLFCYRWFHSLLAKELSEPQLQALQAGQFASFFALLAELGFQPQVTDLQNELAKLTAYDSPRLELAADFAQCFLLEGKLSALPYASYYLDERDLSENLAVMDQWLTKFQLKINRLHNEPSDHLCIYLEVLIKLIETEQPVQVQQQFIRQQLLGWLPQWAEKTAQIHSSTAFYQIISNLLLGFLQQDIA.

Belongs to the TorD/DmsD family. TorD subfamily.

Its subcellular location is the cytoplasm. Involved in the biogenesis of TorA. Acts on TorA before the insertion of the molybdenum cofactor and, as a result, probably favors a conformation of the apoenzyme that is competent for acquiring the cofactor. This is Chaperone protein TorD from Actinobacillus pleuropneumoniae serotype 7 (strain AP76).